The sequence spans 375 residues: N5-carboxyaminoimidazole ribonucleotide synthase (375 aa).

Residues R108, K148, 153 to 159, 183 to 186, E191, H214, and 266 to 267 contribute to the ATP site; these read GYDGKGQ, EQYL, and NE. Positions 112–296 constitute an ATP-grasp domain; sequence KQTLLEANTQ…QFDTHILAIT (185 aa).

It belongs to the PurK/PurT family. As to quaternary structure, homodimer.

It catalyses the reaction 5-amino-1-(5-phospho-beta-D-ribosyl)imidazole + hydrogencarbonate + ATP = 5-carboxyamino-1-(5-phospho-D-ribosyl)imidazole + ADP + phosphate + 2 H(+). The protein operates within purine metabolism; IMP biosynthesis via de novo pathway; 5-amino-1-(5-phospho-D-ribosyl)imidazole-4-carboxylate from 5-amino-1-(5-phospho-D-ribosyl)imidazole (N5-CAIR route): step 1/2. Catalyzes the ATP-dependent conversion of 5-aminoimidazole ribonucleotide (AIR) and HCO(3)(-) to N5-carboxyaminoimidazole ribonucleotide (N5-CAIR). In Staphylococcus epidermidis (strain ATCC 35984 / DSM 28319 / BCRC 17069 / CCUG 31568 / BM 3577 / RP62A), this protein is N5-carboxyaminoimidazole ribonucleotide synthase.